The sequence spans 744 residues: Prestin (744 aa).

Residues methionine 1–lysine 75 lie on the Cytoplasmic side of the membrane. Residues phenylalanine 76–leucine 104 traverse the membrane as a helical segment. Residues alanine 105–proline 108 are Extracellular-facing. The chain crosses the membrane as a helical span at residues proline 109 to phenylalanine 126. Residues glycine 127 to phenylalanine 137 are Cytoplasmic-facing. A helical membrane pass occupies residues alanine 138 to valine 149. Residues arginine 150 to threonine 168 lie on the Extracellular side of the membrane. The Involved in motor function signature appears at isoleucine 158 to threonine 168. 2 N-linked (GlcNAc...) asparagine glycosylation sites follow: asparagine 163 and asparagine 166. The helical transmembrane segment at glutamate 169–cysteine 196 threads the bilayer. The Cytoplasmic portion of the chain corresponds to arginine 197–threonine 206. Residues glutamate 207–phenylalanine 230 traverse the membrane as a helical segment. Over glycine 231–phenylalanine 241 the chain is Extracellular. Positions serine 242 to asparagine 253 form an intramembrane region, helical. Topologically, residues valine 254–asparagine 258 are extracellular. A helical transmembrane segment spans residues valine 259–lysine 276. Residues glutamate 277–proline 291 are Cytoplasmic-facing. The helical transmembrane segment at leucine 292–phenylalanine 307 threads the bilayer. Over asparagine 308–aspartate 332 the chain is Extracellular. A helical transmembrane segment spans residues threonine 333–lysine 359. Topologically, residues threonine 360 to aspartate 370 are cytoplasmic. The helical transmembrane segment at glycine 371–phenylalanine 388 threads the bilayer. The Extracellular portion of the chain corresponds to glutamine 389–serine 396. A helical transmembrane segment spans residues leucine 397 to threonine 406. Serine 398 lines the salicylate pocket. Residues glycine 407–threonine 410 lie on the Cytoplasmic side of the membrane. A helical membrane pass occupies residues glutamine 411 to leucine 431. The Extracellular segment spans residues phenylalanine 432–proline 436. A helical transmembrane segment spans residues glutamine 437 to threonine 464. Serine 465 is a topological domain (cytoplasmic). A helical membrane pass occupies residues lysine 466–phenylalanine 481. At leucine 482 to leucine 484 the chain is on the extracellular side. Residues aspartate 485–glutamine 504 traverse the membrane as a helical segment. Residues serine 505 to alanine 718 form an extended region for STAS domain region. Over serine 505–alanine 744 the chain is Cytoplasmic. Residues alanine 525–serine 713 enclose the STAS domain. The interval alanine 720–alanine 744 is disordered.

This sequence belongs to the SLC26A/SulP transporter (TC 2.A.53) family. Homodimer. Interacts (via STAS domain) with CALM; this interaction is calcium-dependent and the STAS domain interacts with only one lobe of CALM which is an elongated conformation. Interacts with MYH1. In terms of tissue distribution, specifically expressed in outer hair cells of cochleae (at protein level). Not detected in other cells of the organ of Corti.

The protein localises to the lateral cell membrane. The catalysed reaction is 2 hydrogencarbonate(in) + chloride(out) = 2 hydrogencarbonate(out) + chloride(in). Its activity is regulated as follows. Salicylate, an inhibitor of outer hair cell motility, acts as a competitive antagonist at the prestin anion-binding site. In terms of biological role, voltage-sensitive motor protein that drives outer hair cell (OHC) electromotility (eM) and participates in sound amplification in the hearing organ. Converts changes in the transmembrane electric potential into mechanical displacements resulting in the coupling of its expansion to movement of a charged voltage sensor across the lipid membrane. The nature of the voltage sensor is not completely clear, and two models compete. In the first model, acts as an incomplete transporter where intracellular chloride anion acts as extrinsic voltage sensor that drives conformational change in the protein which is sufficient to produce a length change in the plane of the membrane and hence in the length of the OHC. The second model in which multiple charged amino acid residues are distributed at the intracellular and extracellular membrane interfaces that form an intrinsic voltage sensor, whose movement produces the non-linear capacitance (NLC). However, the effective voltage sensor may be the result of a hybrid voltage sensor assembled from intrinsic charge (charged residues) and extrinsic charge (bound anion). Notably, binding of anions to the anion-binding pocket partially neutralizes the intrinsic positive charge rather than to form an electrically negative sensor, therefore remaining charge may serve as voltage sensor that, after depolarization, moves from down (expanded state) to up (contracted) conformation, which is accompanied by an eccentric contraction of the intermembrane cross-sectional area of the protein as well as a major increase in the hydrophobic thickness of the protein having as consequences the plasma membrane thickening and the cell contraction after membrane depolarization. The anion-binding pocket transits from the inward-open (Down) state, where it is exposed toward the intracellular solvent in the absence of anion, to the occluded (Up) state upon anion binding. Salicylate competes for the anion-binding site and inhibits the voltage-sensor movement, and therefore inhibits the charge transfer and electromotility by displacing Cl(-) from the anion-binding site and by preventing the structural transitions to the contracted state. In addition, can act as a weak Cl(-)/HCO3(-) antiporter across the cell membrane and so regulate the intracellular pH of the outer hair cells (OHCs), while firstly found as being unable to mediate electrogenic anion transport. Moreover, supports a role in cardiac mechanical amplification serving as an elastic element to enhance the actomyosin- based sarcomere contraction system. In Rattus norvegicus (Rat), this protein is Prestin.